A 633-amino-acid polypeptide reads, in one-letter code: Basic helix-loop-helix ARNT-like protein 1 (633 aa).

Positions 1–65 (MADQRMDISS…GMDTDKDDQH (65 aa)) are disordered. Ser-17 is modified (phosphoserine; by GSK3-beta). Residues 24-33 (ISSSLSTSGM) are compositionally biased toward polar residues. Positions 36–41 (NRKRKG) match the Nuclear localization signal motif. The bHLH domain occupies 79–132 (NAREAHSQIEKRRRDKMNSFIDELASLVPTCNAMSRKLDKLTVLRMAVQHMKTL). Ser-85 bears the Phosphoserine mark. Ser-97 carries the post-translational modification Phosphoserine; by CK2. Residues 149 to 159 (LSDDELKHLIL) carry the Nuclear export signal 1 motif. The PAS 1 domain maps to 150-222 (SDDELKHLIL…EQLSSSDTAP (73 aa)). A Glycyl lysine isopeptide (Lys-Gly) (interchain with G-Cter in SUMO2 and SUMO3) cross-link involves residue Lys-259. Residue Lys-266 forms a Glycyl lysine isopeptide (Lys-Gly) (interchain with G-Cter in SUMO) linkage. Residues 333–403 (PQPVNGEIRV…ECHRQVLQTR (71 aa)) form the PAS 2 domain. Residues 368-376 (LAYLPQELL) carry the Nuclear export signal 2 motif. Residues 408 to 451 (TNCYKFKIKDGSFITLRSRWFSFMNPWTKEVEYIVSTNTVVSTN) form the PAC domain. Disordered stretches follow at residues 472–499 (SVLQ…RAGA) and 518–555 (GSSP…TPDI). The segment covering 518–528 (GSSPSSCGSSP) has biased composition (low complexity). Lys-545 is subject to N6-acetyllysine.

In terms of assembly, component of the circadian clock oscillator which includes the CRY1/2 proteins, CLOCK or NPAS2, BMAL1 or BMAL2, CSNK1D and/or CSNK1E, TIMELESS and the PER1/2/3 proteins. Forms a heterodimer with CLOCK. The CLOCK-BMAL1 heterodimer is required for E-box-dependent transactivation, for CLOCK nuclear translocation and degradation, and, for phosphorylation of both CLOCK and BMAL1. Interacts with PER1, PER2, CRY1 and CRY2 and this interaction requires a translocation to the nucleus. Interaction of the CLOCK-BMAL1 heterodimer with PER or CRY inhibits transcription activation. In terms of processing, ubiquitinated, leading to its proteasomal degradation. Deubiquitinated by USP9X. Post-translationally, O-glycosylated; contains O-GlcNAc. O-glycosylation by OGT prevents protein degradation by inhibiting ubiquitination. It also stabilizes the CLOCK-BMAL1 heterodimer thereby increasing CLOCK-BMAL1-mediated transcription of genes in the negative loop of the circadian clock such as PER1/2/3 and CRY1/2. Acetylated on Lys-545 by CLOCK during the repression phase of the circadian cycle. Acetylation facilitates recruitment of CRY1 protein and initiates the repression phase of the circadian cycle. Acetylated at Lys-545 by KAT5 during the activation phase of the cycle, leading to recruitment of the positive transcription elongation factor b (P-TEFb) and BRD4, followed by productive elongation of circadian transcripts. Deacetylated by SIRT1, which may result in decreased protein stability. In terms of processing, phosphorylated upon dimerization with CLOCK. Phosphorylation enhances the transcriptional activity, alters the subcellular localization and decreases the stability of the CLOCK-BMAL1 heterodimer by promoting its degradation. Phosphorylation shows circadian variations in the liver with a peak between CT10 to CT14. Phosphorylation at Ser-97 by CK2 is essential for its nuclear localization, its interaction with CLOCK and controls CLOCK nuclear entry. Dephosphorylation at Ser-85 is important for dimerization with CLOCK and transcriptional activity. Post-translationally, sumoylated on Lys-266 upon dimerization with CLOCK. Predominantly conjugated to poly-SUMO2/3 rather than SUMO1 and the level of these conjugates undergo rhythmic variation, peaking at CT9-CT12. Sumoylation localizes it exclusively to the PML body and promotes its ubiquitination in the PML body, ubiquitin-dependent proteasomal degradation and the transcriptional activity of the CLOCK-BMAL1 heterodimer. Undergoes lysosome-mediated degradation in a time-dependent manner in the liver.

It is found in the nucleus. The protein localises to the cytoplasm. The protein resides in the PML body. Its function is as follows. Transcriptional activator which forms a core component of the circadian clock. The circadian clock, an internal time-keeping system, regulates various physiological processes through the generation of approximately 24 hour circadian rhythms in gene expression, which are translated into rhythms in metabolism and behavior. It is derived from the Latin roots 'circa' (about) and 'diem' (day) and acts as an important regulator of a wide array of physiological functions including metabolism, sleep, body temperature, blood pressure, endocrine, immune, cardiovascular, and renal function. Consists of two major components: the central clock, residing in the suprachiasmatic nucleus (SCN) of the brain, and the peripheral clocks that are present in nearly every tissue and organ system. Both the central and peripheral clocks can be reset by environmental cues, also known as Zeitgebers (German for 'timegivers'). The predominant Zeitgeber for the central clock is light, which is sensed by retina and signals directly to the SCN. The central clock entrains the peripheral clocks through neuronal and hormonal signals, body temperature and feeding-related cues, aligning all clocks with the external light/dark cycle. Circadian rhythms allow an organism to achieve temporal homeostasis with its environment at the molecular level by regulating gene expression to create a peak of protein expression once every 24 hours to control when a particular physiological process is most active with respect to the solar day. Transcription and translation of core clock components (CLOCK, NPAS2, BMAL1, BMAL2, PER1, PER2, PER3, CRY1 and CRY2) plays a critical role in rhythm generation, whereas delays imposed by post-translational modifications (PTMs) are important for determining the period (tau) of the rhythms (tau refers to the period of a rhythm and is the length, in time, of one complete cycle). A diurnal rhythm is synchronized with the day/night cycle, while the ultradian and infradian rhythms have a period shorter and longer than 24 hours, respectively. Disruptions in the circadian rhythms contribute to the pathology of cardiovascular diseases, cancer, metabolic syndromes and aging. A transcription/translation feedback loop (TTFL) forms the core of the molecular circadian clock mechanism. Transcription factors, CLOCK or NPAS2 and BMAL1 or BMAL2, form the positive limb of the feedback loop, act in the form of a heterodimer and activate the transcription of core clock genes and clock-controlled genes (involved in key metabolic processes), harboring E-box elements (5'-CACGTG-3') within their promoters. The core clock genes: PER1/2/3 and CRY1/2 which are transcriptional repressors form the negative limb of the feedback loop and interact with the CLOCK|NPAS2-BMAL1|BMAL2 heterodimer inhibiting its activity and thereby negatively regulating their own expression. This heterodimer also activates nuclear receptors NR1D1/2 and RORA/B/G, which form a second feedback loop and which activate and repress BMAL1 transcription, respectively. The preferred binding motif for the CLOCK-BMAL1 heterodimer is 5'-CACGTGA-3', which contains a flanking adenine nucleotide at the 3-prime end of the canonical 6-nucleotide E-box sequence. CLOCK specifically binds to the half-site 5'-CAC-3', while BMAL1 binds to the half-site 5'-GTGA-3'. Essential for the rhythmic interaction of CLOCK with ASS1 and plays a critical role in positively regulating CLOCK-mediated acetylation of ASS1. Plays a role in protecting against lethal sepsis by limiting the expression of immune checkpoint protein CD274 in macrophages in a PKM2-dependent manner. This chain is Basic helix-loop-helix ARNT-like protein 1 (BMAL1), found in Tyto alba (Barn owl).